A 156-amino-acid chain; its full sequence is uncharacterized protein (156 aa).

This is an uncharacterized protein from Invertebrate iridescent virus 3 (IIV-3).